We begin with the raw amino-acid sequence, 228 residues long: Deoxyguanosine kinase (228 aa).

Residue 8-16 (GPIGAGKSS) coordinates ATP. Substrate-binding residues include Glu32, Tyr44, and Gln55. The active-site Proton acceptor is the Asp78. Substrate contacts are provided by Arg79, Asp84, and Glu149.

The protein belongs to the DCK/DGK family. As to quaternary structure, heterodimer of a deoxyadenosine (DAK) and a deoxyguanosine kinase (DGK).

The catalysed reaction is 2'-deoxyguanosine + ATP = dGMP + ADP + H(+). DGK/DAK plays an essential role in generating the deoxyribonucleotide precursors, dGTP and dATP, for DNA metabolism. This Lactobacillus acidophilus (strain ATCC 700396 / NCK56 / N2 / NCFM) protein is Deoxyguanosine kinase.